The primary structure comprises 238 residues: MGKNLLQQRAGKGSPTFRSPSWLRIGKVRYPNIFGHLVGKVIDIVHNPGMNAPVAIIKLENGTKFLTQAIQGLVINQKIEFGKGSPIANGNVIEIGDAPEGTIVCNVEENFGDGGKYARSAGSYAVVVGKSGDKVLIKLPSDKIKAVSNKARATVGVVAGGGVVEKPLLKAGANYWKYKVKAKKWPIVRGVAMNVVDHPHGGGLHQSVSRPSTVSRNAPPGRKVGHIAARRTGRKEGK.

Residues 200–238 (HGGGLHQSVSRPSTVSRNAPPGRKVGHIAARRTGRKEGK) form a disordered region. A compositionally biased stretch (polar residues) spans 206–216 (QSVSRPSTVSR). Positions 223 to 238 (KVGHIAARRTGRKEGK) are enriched in basic residues.

The protein belongs to the universal ribosomal protein uL2 family. In terms of assembly, part of the 50S ribosomal subunit. Forms a bridge to the 30S subunit in the 70S ribosome.

Its function is as follows. One of the primary rRNA binding proteins. Required for association of the 30S and 50S subunits to form the 70S ribosome, for tRNA binding and peptide bond formation. It has been suggested to have peptidyltransferase activity; this is somewhat controversial. Makes several contacts with the 16S rRNA in the 70S ribosome. The protein is Large ribosomal subunit protein uL2 of Saccharolobus islandicus (strain L.S.2.15 / Lassen #1) (Sulfolobus islandicus).